Consider the following 142-residue polypeptide: Large ribosomal subunit protein uL11 (142 aa).

In terms of assembly, part of the ribosomal stalk of the 50S ribosomal subunit. Interacts with L10 and the large rRNA to form the base of the stalk. L10 forms an elongated spine to which L12 dimers bind in a sequential fashion forming a multimeric L10(L12)X complex. Lys-40 is trimethylated or acetylated; other modifications may also exist.

Its function is as follows. Forms part of the ribosomal stalk which helps the ribosome interact with GTP-bound translation factors. The chain is Large ribosomal subunit protein uL11 from Rhodopseudomonas palustris (strain ATCC BAA-98 / CGA009).